The primary structure comprises 257 residues: Protein vip1 (257 aa).

The RRM domain maps to 3 to 76 (NQVIVTNISP…NKIQITSEDG (74 aa)). Residues 74–99 (EDGGAASTTDQGGAGGDQAARQEDKP) form a disordered region. The span at 75-84 (DGGAASTTDQ) shows a compositional bias: low complexity. 2 positions are modified to phosphoserine: Ser132 and Ser177. Positions 217-257 (ARRLADAKNQAEGTASPASSTPTAPAEKEPTAPTTESKTTE) are disordered. Thr230 is modified (phosphothreonine). The span at 230-257 (TASPASSTPTAPAEKEPTAPTTESKTTE) shows a compositional bias: low complexity. Phosphoserine is present on residues Ser232 and Ser235.

This is Protein vip1 (vip1) from Schizosaccharomyces pombe (strain 972 / ATCC 24843) (Fission yeast).